The chain runs to 172 residues: Adenine phosphoribosyltransferase (172 aa).

Belongs to the purine/pyrimidine phosphoribosyltransferase family. Homodimer.

It is found in the cytoplasm. It catalyses the reaction AMP + diphosphate = 5-phospho-alpha-D-ribose 1-diphosphate + adenine. The protein operates within purine metabolism; AMP biosynthesis via salvage pathway; AMP from adenine: step 1/1. Its function is as follows. Catalyzes a salvage reaction resulting in the formation of AMP, that is energically less costly than de novo synthesis. The protein is Adenine phosphoribosyltransferase of Pediococcus pentosaceus (strain ATCC 25745 / CCUG 21536 / LMG 10740 / 183-1w).